A 464-amino-acid chain; its full sequence is Asparagine--tRNA ligase (464 aa).

Belongs to the class-II aminoacyl-tRNA synthetase family. In terms of assembly, homodimer.

The protein localises to the cytoplasm. It catalyses the reaction tRNA(Asn) + L-asparagine + ATP = L-asparaginyl-tRNA(Asn) + AMP + diphosphate + H(+). This Cytophaga hutchinsonii (strain ATCC 33406 / DSM 1761 / CIP 103989 / NBRC 15051 / NCIMB 9469 / D465) protein is Asparagine--tRNA ligase.